The primary structure comprises 142 residues: Mediator of RNA polymerase II transcription subunit 21 (142 aa).

The stretch at 87–131 (AEEQLSRIDSLQKKLIQVEGEKIEAIKRKESLTKDIEELINEFTE) forms a coiled coil.

The protein belongs to the Mediator complex subunit 21 family. Component of the Mediator complex.

The protein resides in the nucleus. Component of the Mediator complex, a coactivator involved in the regulated transcription of nearly all RNA polymerase II-dependent genes. Mediator functions as a bridge to convey information from gene-specific regulatory proteins to the basal RNA polymerase II transcription machinery. Mediator is recruited to promoters by direct interactions with regulatory proteins and serves as a scaffold for the assembly of a functional preinitiation complex with RNA polymerase II and the general transcription factors. In Eremothecium gossypii (strain ATCC 10895 / CBS 109.51 / FGSC 9923 / NRRL Y-1056) (Yeast), this protein is Mediator of RNA polymerase II transcription subunit 21 (SRB7).